We begin with the raw amino-acid sequence, 163 residues long: NADH-quinone oxidoreductase subunit I (163 aa).

2 4Fe-4S ferredoxin-type domains span residues 53-83 (LRRY…IEAG) and 94-123 (VRYD…EGPN). [4Fe-4S] cluster contacts are provided by Cys-63, Cys-66, Cys-69, Cys-73, Cys-103, Cys-106, Cys-109, and Cys-113.

Belongs to the complex I 23 kDa subunit family. In terms of assembly, NDH-1 is composed of 14 different subunits. Subunits NuoA, H, J, K, L, M, N constitute the membrane sector of the complex. It depends on [4Fe-4S] cluster as a cofactor.

The protein resides in the cell inner membrane. It carries out the reaction a quinone + NADH + 5 H(+)(in) = a quinol + NAD(+) + 4 H(+)(out). Functionally, NDH-1 shuttles electrons from NADH, via FMN and iron-sulfur (Fe-S) centers, to quinones in the respiratory chain. The immediate electron acceptor for the enzyme in this species is believed to be ubiquinone. Couples the redox reaction to proton translocation (for every two electrons transferred, four hydrogen ions are translocated across the cytoplasmic membrane), and thus conserves the redox energy in a proton gradient. The chain is NADH-quinone oxidoreductase subunit I from Brucella suis (strain ATCC 23445 / NCTC 10510).